Reading from the N-terminus, the 269-residue chain is Hydroxyethylthiazole kinase (269 aa).

M45 is a substrate binding site. ATP is bound by residues R121 and T167. Substrate is bound at residue G194.

It belongs to the Thz kinase family. Requires Mg(2+) as cofactor.

It catalyses the reaction 5-(2-hydroxyethyl)-4-methylthiazole + ATP = 4-methyl-5-(2-phosphooxyethyl)-thiazole + ADP + H(+). The protein operates within cofactor biosynthesis; thiamine diphosphate biosynthesis; 4-methyl-5-(2-phosphoethyl)-thiazole from 5-(2-hydroxyethyl)-4-methylthiazole: step 1/1. Functionally, catalyzes the phosphorylation of the hydroxyl group of 4-methyl-5-beta-hydroxyethylthiazole (THZ). The polypeptide is Hydroxyethylthiazole kinase (Bacillus mycoides (strain KBAB4) (Bacillus weihenstephanensis)).